We begin with the raw amino-acid sequence, 880 residues long: Alanine--tRNA ligase (880 aa).

Residues His-567, His-571, Cys-669, and His-673 each contribute to the Zn(2+) site.

The protein belongs to the class-II aminoacyl-tRNA synthetase family. The cofactor is Zn(2+).

It localises to the cytoplasm. The enzyme catalyses tRNA(Ala) + L-alanine + ATP = L-alanyl-tRNA(Ala) + AMP + diphosphate. Functionally, catalyzes the attachment of alanine to tRNA(Ala) in a two-step reaction: alanine is first activated by ATP to form Ala-AMP and then transferred to the acceptor end of tRNA(Ala). Also edits incorrectly charged Ser-tRNA(Ala) and Gly-tRNA(Ala) via its editing domain. The polypeptide is Alanine--tRNA ligase (Bacillus cereus (strain ATCC 14579 / DSM 31 / CCUG 7414 / JCM 2152 / NBRC 15305 / NCIMB 9373 / NCTC 2599 / NRRL B-3711)).